Reading from the N-terminus, the 513-residue chain is MQLNSTEISDLIKQRIEQFEVVSEARNEGTIVAVSDGIIRIHGLADVMQGEMIELPGNRFAIALNLERDSVGAVVMGPYATLAEGDKVKTTGRILEVPVGRGLLGRVVNTLGEPIDGKGPIDSDGFSPVEVIAPGVIERKSVDQPVQTGYKAVDSMIPIGRGQRELIIGDRQIGKTALAIDAIINQKDSGIKCVYVAVGQKASTIANVVRKLEEHGALANTIVVVATASEAAALQYLAPYSGCTMGEYFRDRGEDSLIVYDDLSKQAVAYRQISLLLKRPPGREAYPGDVFYLHSRLLERSSRVNAEYVEKFTKGEVKGQTGSLTALPIIETQAGDVSAFVPTNVISITDGQIFLETDLFNSGLRPAVNPGISVSRVGGAAQTKIIKKLSGGIRTALAQYRELAAFSQFASDLDDATRAQLEHGERVTELMKQKQYAPMSIADQSVSIFAAEKGYLKSVELNKIGDFEASLLSFMNSEHADLMKTINETGNYNADIEGELKASLDKFVETQTW.

169–176 (GDRQIGKT) is a binding site for ATP.

The protein belongs to the ATPase alpha/beta chains family. In terms of assembly, F-type ATPases have 2 components, CF(1) - the catalytic core - and CF(0) - the membrane proton channel. CF(1) has five subunits: alpha(3), beta(3), gamma(1), delta(1), epsilon(1). CF(0) has three main subunits: a(1), b(2) and c(9-12). The alpha and beta chains form an alternating ring which encloses part of the gamma chain. CF(1) is attached to CF(0) by a central stalk formed by the gamma and epsilon chains, while a peripheral stalk is formed by the delta and b chains.

It localises to the cell inner membrane. The enzyme catalyses ATP + H2O + 4 H(+)(in) = ADP + phosphate + 5 H(+)(out). Produces ATP from ADP in the presence of a proton gradient across the membrane. The alpha chain is a regulatory subunit. This is ATP synthase subunit alpha from Shewanella piezotolerans (strain WP3 / JCM 13877).